A 177-amino-acid chain; its full sequence is Inorganic pyrophosphatase (177 aa).

Substrate is bound by residues Lys-30, Arg-44, and Tyr-56. Mg(2+) is bound by residues Asp-66, Asp-71, and Asp-103. Substrate is bound at residue Tyr-142.

Belongs to the PPase family. As to quaternary structure, homohexamer. Mg(2+) serves as cofactor.

It localises to the cytoplasm. It catalyses the reaction diphosphate + H2O = 2 phosphate + H(+). In terms of biological role, catalyzes the hydrolysis of inorganic pyrophosphate (PPi) forming two phosphate ions. The sequence is that of Inorganic pyrophosphatase from Agrobacterium fabrum (strain C58 / ATCC 33970) (Agrobacterium tumefaciens (strain C58)).